A 91-amino-acid chain; its full sequence is Islet amyloid polypeptide (91 aa).

A signal peptide spans 1–22 (MGILKLPVVLIVLCVALNHLEG). The propeptide occupies 23–33 (GGKPTESHQME). Cys-37 and Cys-42 form a disulfide bridge. A Tyrosine amide modification is found at Tyr-72. Positions 78 to 91 (VEILKREPLSYLPI) are excised as a propeptide.

This sequence belongs to the calcitonin family. Can form homodimers. Interacts with IDE and INS. Interaction with INS inhibits homodimerization and fibril formation.

It is found in the secreted. Functionally, amylin/IAPP is a glucoregulatory peptide hormone that plays an important role in the regulation of energy homeostasis. Selectively inhibits insulin-stimulated glucose utilization and glycogen deposition in muscle, while not affecting adipocyte glucose metabolism. IAPP function is mediated by the CALCR-RAMPs (AMYRs) receptor complexes. Amylin can also bind CALCR receptor in the absence of RAMPs, although it is more selective for AMYRs. This chain is Islet amyloid polypeptide (IAPP), found in Bos taurus (Bovine).